We begin with the raw amino-acid sequence, 309 residues long: Taste receptor type 2 member 124 (309 aa).

The Extracellular segment spans residues 1–7 (MVSVLHS). Residues 8-28 (ISTIIIIAEFVWGNLSNGLIV) form a helical membrane-spanning segment. Over 29–46 (LKNCLDWINIKELSTLDQ) the chain is Cytoplasmic. The chain crosses the membrane as a helical span at residues 47–67 (ILILLAISRISLIWETLLMWV). The Extracellular portion of the chain corresponds to 68–81 (KDKLISSITIEELK). The helical transmembrane segment at 82–102 (MIMFSFMLSSHFSLWLATALS) threads the bilayer. The Cytoplasmic portion of the chain corresponds to 103 to 127 (TFYLFRIANCSWQIFLYLKWRLKHL). A helical membrane pass occupies residues 128 to 148 (IVQMLLGSVMFLIANIIQITI). Topologically, residues 149–182 (TLEKRFYQYKGNTSVNSIQNEFALLIEMMLFNMT) are extracellular. Residues asparagine 160 and asparagine 180 are each glycosylated (N-linked (GlcNAc...) asparagine). A helical transmembrane segment spans residues 183-203 (IFSVIPFLLALISFFLLIFSL). The Cytoplasmic segment spans residues 204 to 227 (WKHLQRMQLNSREDRDPSTKAHRN). Residues 228–248 (ALGIMVSFLLLYTMYVLSLLI) form a helical membrane-spanning segment. At 249–261 (SWIAQKNQSELVH) the chain is on the extracellular side. Asparagine 255 carries an N-linked (GlcNAc...) asparagine glycan. The chain crosses the membrane as a helical span at residues 262 to 282 (IICMITSLLNPSVHSSILILG). The Cytoplasmic portion of the chain corresponds to 283–309 (NFKLKQSSLCILRHLGCRLKSQNTPTT).

It belongs to the G-protein coupled receptor T2R family.

It localises to the membrane. Putative taste receptor which may play a role in the perception of bitterness. This chain is Taste receptor type 2 member 124, found in Rattus norvegicus (Rat).